The primary structure comprises 173 residues: Crossover junction endodeoxyribonuclease RuvC (173 aa).

Residues Asp-8, Glu-67, and Asp-139 contribute to the active site. Positions 8, 67, and 139 each coordinate Mg(2+).

It belongs to the RuvC family. Homodimer which binds Holliday junction (HJ) DNA. The HJ becomes 2-fold symmetrical on binding to RuvC with unstacked arms; it has a different conformation from HJ DNA in complex with RuvA. In the full resolvosome a probable DNA-RuvA(4)-RuvB(12)-RuvC(2) complex forms which resolves the HJ. Mg(2+) is required as a cofactor.

The protein localises to the cytoplasm. The enzyme catalyses Endonucleolytic cleavage at a junction such as a reciprocal single-stranded crossover between two homologous DNA duplexes (Holliday junction).. The RuvA-RuvB-RuvC complex processes Holliday junction (HJ) DNA during genetic recombination and DNA repair. Endonuclease that resolves HJ intermediates. Cleaves cruciform DNA by making single-stranded nicks across the HJ at symmetrical positions within the homologous arms, yielding a 5'-phosphate and a 3'-hydroxyl group; requires a central core of homology in the junction. The consensus cleavage sequence is 5'-(A/T)TT(C/G)-3'. Cleavage occurs on the 3'-side of the TT dinucleotide at the point of strand exchange. HJ branch migration catalyzed by RuvA-RuvB allows RuvC to scan DNA until it finds its consensus sequence, where it cleaves and resolves the cruciform DNA. In Salmonella paratyphi C (strain RKS4594), this protein is Crossover junction endodeoxyribonuclease RuvC.